Here is a 156-residue protein sequence, read N- to C-terminus: ATP synthase subunit b (156 aa).

Residues 7-29 (LFAQMVVFLVLAWFTMKFVWPPL) traverse the membrane as a helical segment.

This sequence belongs to the ATPase B chain family. As to quaternary structure, F-type ATPases have 2 components, F(1) - the catalytic core - and F(0) - the membrane proton channel. F(1) has five subunits: alpha(3), beta(3), gamma(1), delta(1), epsilon(1). F(0) has three main subunits: a(1), b(2) and c(10-14). The alpha and beta chains form an alternating ring which encloses part of the gamma chain. F(1) is attached to F(0) by a central stalk formed by the gamma and epsilon chains, while a peripheral stalk is formed by the delta and b chains.

The protein localises to the cell inner membrane. Functionally, f(1)F(0) ATP synthase produces ATP from ADP in the presence of a proton or sodium gradient. F-type ATPases consist of two structural domains, F(1) containing the extramembraneous catalytic core and F(0) containing the membrane proton channel, linked together by a central stalk and a peripheral stalk. During catalysis, ATP synthesis in the catalytic domain of F(1) is coupled via a rotary mechanism of the central stalk subunits to proton translocation. Component of the F(0) channel, it forms part of the peripheral stalk, linking F(1) to F(0). The protein is ATP synthase subunit b of Burkholderia vietnamiensis (strain G4 / LMG 22486) (Burkholderia cepacia (strain R1808)).